A 279-amino-acid chain; its full sequence is Release factor glutamine methyltransferase (279 aa).

S-adenosyl-L-methionine is bound by residues 118–122 (GTGSG), Asp141, and Asn182. 182–185 (NPPY) lines the substrate pocket.

This sequence belongs to the protein N5-glutamine methyltransferase family. PrmC subfamily.

It carries out the reaction L-glutaminyl-[peptide chain release factor] + S-adenosyl-L-methionine = N(5)-methyl-L-glutaminyl-[peptide chain release factor] + S-adenosyl-L-homocysteine + H(+). In terms of biological role, methylates the class 1 translation termination release factors RF1/PrfA and RF2/PrfB on the glutamine residue of the universally conserved GGQ motif. The polypeptide is Release factor glutamine methyltransferase (Streptococcus pneumoniae (strain ATCC BAA-255 / R6)).